The following is a 451-amino-acid chain: MPREIITLQLGQCGNQIGFEFWKQLCAEHGISPEGIVEEFATEGTDRKDVFFYQADDEHYIPRAVLLDLEPRVIHSILNSSYAKLYNPENIYLSEHGGGAGNNWGRGFSQGEKIHEDIFDIIDREADGSDSLEGFVLCHSIAGGTGSGLGSYLLERLNDRYPKKLVQTYSVFPNQDEMSDVVVQPYNSLLTLKRLTQNADCVVVLDNTALNRIATDRLHIQNPSFSQINQLVSTIMSASTTTLRYPGYMNNDLIGLIASLIPTPRLHFLMTGYTPLTTDQSVASVRKTTVLDVMRRLLQPKNVMVSTGRDRQTNHCYIAILNIIQGEVDPTQVHKSLQRIRERKLANFIPWGPASIQVALSRKSPYLPSAHRVSGLMMANHTSISSLFESSCQQYDKLWKRGAFLEQFRKEDIFKDNFEEMHRSREVVQELIDEYHAATRPDYISWGTQEQ.

Phosphoserine; by BRSK1 is present on Ser-131. A GTP-binding site is contributed by 142–148; the sequence is AGGTGSG.

It belongs to the tubulin family. Component of the gamma-tubulin ring complex (gTuRC) consisting of TUBGCP2, TUBGCP3, TUBGCP4, TUBGCP5 and TUBGCP6 and gamma-tubulin TUBG1 or TUBG2. TUBGCP2, TUBGCP3, TUBGCP4, TUBGCP5 and TUBGCP6 assemble in a 5:5:2:1:1 stoichiometry; each is associated with a gamma-tubulin, thereby arranging 14 gamma-tubulins in a helical manner. Gamma-tubulin at the first position is blocked by TUBGCP3 at the last position, allowing 13 protafilaments to grow into a microtubule. Interacts with alpha-beta tubulin heterodimers; the interaction allows microtubules to nucleate from the gTuRC. Phosphorylation at Ser-131 by BRSK1 regulates centrosome duplication, possibly by mediating relocation of gamma-tubulin and its associated proteins from the cytoplasm to the centrosome.

Its subcellular location is the cytoplasm. It is found in the cytoskeleton. It localises to the microtubule organizing center. The protein resides in the centrosome. Functionally, tubulin is the major constituent of microtubules, protein filaments consisting of alpha- and beta-tubulin heterodimers. Gamma-tubulin is a key component of the gamma-tubulin ring complex (gTuRC) which mediates microtubule nucleation. The gTuRC regulates the minus-end nucleation of alpha-beta tubulin heterodimers that grow into microtubule protafilaments, a critical step in centrosome duplication and spindle formation. This Mus musculus (Mouse) protein is Tubulin gamma-2 chain (Tubg2).